A 1011-amino-acid polypeptide reads, in one-letter code: Liprin-beta-1 (1011 aa).

Ser37 carries the phosphoserine modification. Thr39 carries the post-translational modification Phosphothreonine. Phosphoserine is present on Ser40. Positions 156-405 form a coiled coil; that stretch reads QQELLSRTSL…VPEEFHTTIL (250 aa). An N6-acetyllysine modification is found at Lys322. 2 disordered regions span residues 420–439 and 463–634; these read ETSE…EEND and KSSS…RDLG. 2 positions are modified to phosphoserine: Ser434 and Ser466. A compositionally biased stretch (basic and acidic residues) spans 470–492; sequence LKKETSDGEKETIQKTSEDRAPA. A Glycyl lysine isopeptide (Lys-Gly) (interchain with G-Cter in SUMO2) cross-link involves residue Lys471. A phosphoserine mark is found at Ser523 and Ser540. Residues 546–556 show a composition bias toward basic and acidic residues; the sequence is ETEKETAEHLD. Ser579 is subject to Phosphoserine. Positions 584–598 are enriched in basic residues; it reads KKSRGIMKLFGKLRR. A phosphoserine mark is found at Ser601 and Ser636. SAM domains lie at 647-711 and 719-782; these read WTKE…LGSE and LDFN…LRIN. Ser794 is subject to Phosphoserine. In terms of domain architecture, SAM 3 spans 804–876; sequence VQKWTNHRVM…ATHFNLLIGA (73 aa). Phosphoserine is present on residues Ser999, Ser1001, and Ser1003. Thr1005 carries the post-translational modification Phosphothreonine.

It belongs to the liprin family. Liprin-beta subfamily. In terms of assembly, forms homodimers and heterodimers. Interacts with S100A4 in a Ca(2+)-dependent mode. Part of a cortical microtubule stabilization complex (CMSC) composed of KANK1, PPFIA1, PPFIBP1, ERC1/ELKS, PHLDB2/LL5beta, CLASPs, KIF21A and possibly additional interactors; within CMSCs KANK1 and PHLDB2/LL5beta seem to be the core components for recruiting microtubule-binding proteins KIF21A and CLASPs, whereas PPFIA1, PPFIBP1 and ERC1/ELKS serve as scaffolds for protein clustering. Interacts with KANK1 (via CC1 domain, residues 244-339). As to expression, widely expressed. Absent in liver.

Its subcellular location is the cytoplasm. It localises to the cell cortex. In terms of biological role, may regulate the disassembly of focal adhesions. Did not bind receptor-like tyrosine phosphatases type 2A. This Homo sapiens (Human) protein is Liprin-beta-1 (PPFIBP1).